Here is a 23-residue protein sequence, read N- to C-terminus: Coenzyme PQQ synthesis protein A (23 aa).

The pyrroloquinoline quinone (Glu-Tyr) cross-link spans 15 to 19; the sequence is EVTMY.

This sequence belongs to the PqqA family.

It participates in cofactor biosynthesis; pyrroloquinoline quinone biosynthesis. In terms of biological role, required for coenzyme pyrroloquinoline quinone (PQQ) biosynthesis. PQQ is probably formed by cross-linking a specific glutamate to a specific tyrosine residue and excising these residues from the peptide. In Ectopseudomonas mendocina (strain ymp) (Pseudomonas mendocina), this protein is Coenzyme PQQ synthesis protein A.